A 427-amino-acid chain; its full sequence is Glutamate-1-semialdehyde 2,1-aminomutase (427 aa).

N6-(pyridoxal phosphate)lysine is present on Lys265.

The protein belongs to the class-III pyridoxal-phosphate-dependent aminotransferase family. HemL subfamily. In terms of assembly, homodimer. Requires pyridoxal 5'-phosphate as cofactor.

Its subcellular location is the cytoplasm. It catalyses the reaction (S)-4-amino-5-oxopentanoate = 5-aminolevulinate. Its pathway is porphyrin-containing compound metabolism; protoporphyrin-IX biosynthesis; 5-aminolevulinate from L-glutamyl-tRNA(Glu): step 2/2. The protein is Glutamate-1-semialdehyde 2,1-aminomutase of Burkholderia cenocepacia (strain HI2424).